The following is an 81-amino-acid chain: Cytochrome b559 subunit alpha (81 aa).

Residues 21–35 (VIHALTIPALFLAGW) form a helical membrane-spanning segment. H23 is a heme binding site.

It belongs to the PsbE/PsbF family. As to quaternary structure, heterodimer of an alpha subunit and a beta subunit. PSII is composed of 1 copy each of membrane proteins PsbA, PsbB, PsbC, PsbD, PsbE, PsbF, PsbH, PsbI, PsbJ, PsbK, PsbL, PsbM, PsbT, PsbX, PsbY, PsbZ, Psb30/Ycf12, peripheral proteins PsbO, CyanoQ (PsbQ), PsbU, PsbV and a large number of cofactors. It forms dimeric complexes. The cofactor is heme b.

Its subcellular location is the cellular thylakoid membrane. In terms of biological role, this b-type cytochrome is tightly associated with the reaction center of photosystem II (PSII). PSII is a light-driven water:plastoquinone oxidoreductase that uses light energy to abstract electrons from H(2)O, generating O(2) and a proton gradient subsequently used for ATP formation. It consists of a core antenna complex that captures photons, and an electron transfer chain that converts photonic excitation into a charge separation. In Synechococcus sp. (strain JA-2-3B'a(2-13)) (Cyanobacteria bacterium Yellowstone B-Prime), this protein is Cytochrome b559 subunit alpha.